We begin with the raw amino-acid sequence, 283 residues long: MSTKFKVFREFTSDDSFLNQVIPENITEFQVTLSLARDYDGNNSTNGKFIPYWDTEKVTPEVIKKFKKKYEPTALRVKVLVSIGNKNKQFPFTIGSDSNSEAWVSEATASLKSIIKTYNLDGIDVSYEDIAANEADFVNSVGGLVRNLKQNKLITVASFATSADAANNKFYNLLYAEYATFFDTVVFLSWVGFTPSRANPVASLEEKILAVANEYKAVKAFLVAYSTVAEDWANFSPPIFFITLHGLLGNSAVKGASIKVISDATASFPAKWIPEILLLAASK.

Residues 5-283 (FKVFREFTSD…PEILLLAASK (279 aa)) enclose the GH18 domain. The active-site Proton donor is the Glu128.

The protein belongs to the glycosyl hydrolase 18 family. Forms part of the RuBisCO complex. Leaves.

This Glycine max (Soybean) protein is RuBisCO-associated protein.